Here is a 585-residue protein sequence, read N- to C-terminus: MGKIVRVTGPLVVADEMRGSRMYEVVRVGELGLIGEIIRLEGDKAVIQVYEETAGIKPGEPVMGTGASLSVELGPGLLTSIYDGIQRPLEILRSQSGDFIGRGLTAPALSRDKKWHFTPKVKVGDKVVGGDIIGVVPETSIIEHKIMIPPEIEGEIIEIVGEGDYTIEEVIAKVKAPNGEIKEVRMYQRWPVRMKRPYKQKLPPEVPLVTGQRTIDTFFPQAKGGTAAIPGPFGSGKTVTQHQLAKWSDAEVVVYIGCGERGNEMTDVLEEFPKLKDPRTGKPLMERTVLIANTSNMPVAAREASIYTGITIAEYFRDMGYNVALMADSTSRWAEALREISGRLEEMPGEEGYPAYLASKVAEFYERAGRVRTLGSDDRIGSVSVIGAVSPPGGDLSDPVVQNTLRVVKVFWALDADLARRRHFPAINWLTSYSLYVDSIKDWWQNNVDPEWKAMRDEAMALLQKESELEEIVRIVGPDALPEREKAILLVARMLREDYLQQDAFHEVDTYCLPKKQVTMMRVILNFYRHTMRAIDAGIPVEEIAKLPVREEIGRMKYNPNIEEIAVLMEKTKEQFEELFKKYGE.

231-238 (GPFGSGKT) lines the ATP pocket.

The protein belongs to the ATPase alpha/beta chains family. As to quaternary structure, has multiple subunits with at least A(3), B(3), C, D, E, F, H, I and proteolipid K(x).

The protein resides in the cell membrane. It carries out the reaction ATP + H2O + 4 H(+)(in) = ADP + phosphate + 5 H(+)(out). Functionally, component of the A-type ATP synthase that produces ATP from ADP in the presence of a proton gradient across the membrane. The A chain is the catalytic subunit. This Thermococcus sibiricus (strain DSM 12597 / MM 739) protein is A-type ATP synthase subunit A.